The chain runs to 514 residues: Extracellular exo-inulinase (514 aa).

The first 18 residues, M1–S18, serve as a signal peptide directing secretion. Substrate contacts are provided by residues N33 to D34 and Q52. The Nucleophile role is filled by D34. A glycan (N-linked (GlcNAc...) asparagine) is linked at N56. Residues W60 and S95 each coordinate substrate. N-linked (GlcNAc...) asparagine glycans are attached at residues N104 and N110. A substrate-binding site is contributed by R162–D163. Residues N197 and N203 are each glycosylated (N-linked (GlcNAc...) asparagine). Substrate is bound by residues E214 and W300. Catalysis depends on E214, which acts as the Proton donor/acceptor. N-linked (GlcNAc...) asparagine glycosylation is found at N357, N371, N389, and N422.

The protein belongs to the glycosyl hydrolase 32 family.

Its subcellular location is the secreted. The catalysed reaction is Hydrolysis of terminal, non-reducing (2-&gt;1)- and (2-&gt;6)-linked beta-D-fructofuranose residues in fructans.. Functionally, exo-inulinase involved in utilization of the plant storage polymer inulin, consisting of fructooligosaccharides with a degree of polymerization (DP) value from 2 to 60. Splits off terminal fructose units successively from the non-reducing end of the inulin molecule. The protein is Extracellular exo-inulinase of Meyerozyma guilliermondii (strain ATCC 6260 / CBS 566 / DSM 6381 / JCM 1539 / NBRC 10279 / NRRL Y-324) (Yeast).